The following is a 437-amino-acid chain: Trigger factor (437 aa).

Residues D161–P246 enclose the PPIase FKBP-type domain.

This sequence belongs to the FKBP-type PPIase family. Tig subfamily.

The protein localises to the cytoplasm. The enzyme catalyses [protein]-peptidylproline (omega=180) = [protein]-peptidylproline (omega=0). In terms of biological role, involved in protein export. Acts as a chaperone by maintaining the newly synthesized protein in an open conformation. Functions as a peptidyl-prolyl cis-trans isomerase. In Pseudomonas putida (strain GB-1), this protein is Trigger factor.